The sequence spans 398 residues: Argininosuccinate synthase (398 aa).

10-18 contacts ATP; the sequence is AYSGGLDTS. Position 87 (Y87) interacts with L-citrulline. G117 lines the ATP pocket. Residues T119, N123, and D124 each coordinate L-aspartate. N123 provides a ligand contact to L-citrulline. R127, S175, E260, and Y272 together coordinate L-citrulline.

This sequence belongs to the argininosuccinate synthase family. Type 1 subfamily. Homotetramer.

It is found in the cytoplasm. It catalyses the reaction L-citrulline + L-aspartate + ATP = 2-(N(omega)-L-arginino)succinate + AMP + diphosphate + H(+). It functions in the pathway amino-acid biosynthesis; L-arginine biosynthesis; L-arginine from L-ornithine and carbamoyl phosphate: step 2/3. The chain is Argininosuccinate synthase from Lactococcus lactis subsp. lactis (strain IL1403) (Streptococcus lactis).